The sequence spans 505 residues: MEAQSFGTLNYIALFAYLGAIMAVGVYFARRQKSADDYFKAGGRIPGWAAGFSVFATTLSSITFMSIPAKAYTSDWTFLIGQYVAIAILPIVFWFYIPFFRKLNLTSVYEYLERRFDVRMRLFGSISFMLFHIGRIAIVTYLTALALMPFIDISPLMIVFLIGVLCIIYTFLGGIEGVIWTDVIQGVMLSVAAILIFVVICFNVDGGIVEVFSMSNQADKYFPAEQFSWSWTDSTIPVLMIGFFFASLQQFTASQDVVQRYIVTDNIDETKKALITNAKLVACVPIFFFAVGSALFAYYTQNPELLPENFNTGGILPFYVISQMPVGVAGLIIAAIFAASQSSISSSLNSIAACFTSDIYEKVSKNPTSEQKLRIGRTLTVVAGLLGVVASTYLIMSNESEIWDAFNSLLGLMGGPMTGLFMLGIFVRRANANSALLGVVASIATVLWVRSATDLNFFFYGVIGTLMVVIVGYLTAPMFKNNLNSDEIDELSATKEKRSTTAEKA.

The next 5 membrane-spanning stretches (helical) occupy residues 9–29 (LNYI…VYFA), 45–65 (IPGW…ITFM), 80–100 (IGQY…IPFF), 128–148 (FMLF…LALM), and 155–175 (PLMI…LGGI). Residue Ala56 coordinates Na(+). Position 58 (Thr58) interacts with N-acetyl-alpha-neuraminate. Leu59 is a binding site for Na(+). 4 residues coordinate N-acetyl-alpha-neuraminate: Ser60, Thr63, Gln82, and Arg135. Position 182 (Asp182) interacts with Na(+). A run of 4 helical transmembrane segments spans residues 183–203 (VIQG…ICFN), 227–247 (FSWS…FFAS), 280–300 (LVAC…AYYT), and 318–338 (FYVI…AIFA). 5 residues coordinate Na(+): Ala339, Ser342, Ser343, Ser345, and Ser346. 4 helical membrane-spanning segments follow: residues 378–398 (TLTV…IMSN), 406–426 (FNSL…LGIF), 435–455 (ALLG…ATDL), and 457–477 (FFFY…LTAP).

It belongs to the sodium:solute symporter (SSF) (TC 2.A.21) family.

The protein localises to the cell inner membrane. The catalysed reaction is N-acetyl-alpha-neuraminate(out) + 2 Na(+)(out) = N-acetyl-alpha-neuraminate(in) + 2 Na(+)(in). Symporter that uses the Na(+) gradient as the driving force for the uptake of the sialic acid N-acetylneuraminic acid (Neu5Ac). Might play a role in persistence after colonization. This is Sodium/sialic acid symporter NanT from Aliivibrio fischeri (strain ATCC 700601 / ES114) (Vibrio fischeri).